Here is a 207-residue protein sequence, read N- to C-terminus: BTB/POZ domain-containing protein At1g01640 (207 aa).

The region spanning 24–94 (TDVLVKPGEE…LYSGNLKAPY (71 aa)) is the BTB domain.

In terms of assembly, interacts with CUL3A.

The protein operates within protein modification; protein ubiquitination. Functionally, may act as a substrate-specific adapter of an E3 ubiquitin-protein ligase complex (CUL3-RBX1-BTB) which mediates the ubiquitination and subsequent proteasomal degradation of target proteins. This is BTB/POZ domain-containing protein At1g01640 from Arabidopsis thaliana (Mouse-ear cress).